The sequence spans 105 residues: Serine protease inhibitor Kazal-type 8 (105 aa).

An N-terminal signal peptide occupies residues 1 to 21; the sequence is MKVIFSVAVLVLASSVWTSLA. Intrachain disulfides connect C44/C78, C51/C75, and C64/C96. One can recognise a Kazal-like domain in the interval 44 to 98; the sequence is CIKNIQLCWILSYFKVSEPICGSNQVTYEGECHLCSGILYEDRTVIKVHDGPCEH.

In terms of tissue distribution, expressed in epydiymis, in the cauda, corpus and caput.

It is found in the secreted. In terms of biological role, probable serine protease inhibitor. The protein is Serine protease inhibitor Kazal-type 8 (Spink8) of Mus musculus (Mouse).